A 262-amino-acid chain; its full sequence is Acyl-[acyl-carrier-protein]--UDP-N-acetylglucosamine O-acyltransferase (262 aa).

The protein belongs to the transferase hexapeptide repeat family. LpxA subfamily. Homotrimer.

The protein resides in the cytoplasm. The enzyme catalyses a (3R)-hydroxyacyl-[ACP] + UDP-N-acetyl-alpha-D-glucosamine = a UDP-3-O-[(3R)-3-hydroxyacyl]-N-acetyl-alpha-D-glucosamine + holo-[ACP]. It functions in the pathway glycolipid biosynthesis; lipid IV(A) biosynthesis; lipid IV(A) from (3R)-3-hydroxytetradecanoyl-[acyl-carrier-protein] and UDP-N-acetyl-alpha-D-glucosamine: step 1/6. In terms of biological role, involved in the biosynthesis of lipid A, a phosphorylated glycolipid that anchors the lipopolysaccharide to the outer membrane of the cell. The sequence is that of Acyl-[acyl-carrier-protein]--UDP-N-acetylglucosamine O-acyltransferase from Klebsiella pneumoniae (strain 342).